The following is a 113-amino-acid chain: Large ribosomal subunit protein bL20c (113 aa).

The protein belongs to the bacterial ribosomal protein bL20 family.

The protein resides in the plastid. The protein localises to the chloroplast. Its function is as follows. Binds directly to 23S ribosomal RNA and is necessary for the in vitro assembly process of the 50S ribosomal subunit. It is not involved in the protein synthesizing functions of that subunit. The sequence is that of Large ribosomal subunit protein bL20c from Nephroselmis olivacea (Green alga).